A 156-amino-acid polypeptide reads, in one-letter code: RNA pyrophosphohydrolase (156 aa).

In terms of domain architecture, Nudix hydrolase spans 6-148 (NYRPNVAAIV…KKNIYVRVIK (143 aa)). A Nudix box motif is present at residues 43 to 64 (GGIDKGESVKNALFRELKEEIG).

The protein belongs to the Nudix hydrolase family. RppH subfamily. A divalent metal cation serves as cofactor.

Functionally, accelerates the degradation of transcripts by removing pyrophosphate from the 5'-end of triphosphorylated RNA, leading to a more labile monophosphorylated state that can stimulate subsequent ribonuclease cleavage. The protein is RNA pyrophosphohydrolase of Campylobacter jejuni subsp. jejuni serotype O:2 (strain ATCC 700819 / NCTC 11168).